Reading from the N-terminus, the 353-residue chain is Ferredoxin--NADP reductase (353 aa).

Asp-33, Gln-41, Tyr-46, Val-86, Phe-121, Asp-293, and Thr-333 together coordinate FAD.

It belongs to the ferredoxin--NADP reductase type 2 family. Homodimer. It depends on FAD as a cofactor.

It carries out the reaction 2 reduced [2Fe-2S]-[ferredoxin] + NADP(+) + H(+) = 2 oxidized [2Fe-2S]-[ferredoxin] + NADPH. This Verminephrobacter eiseniae (strain EF01-2) protein is Ferredoxin--NADP reductase.